A 615-amino-acid polypeptide reads, in one-letter code: Delta-like protein B (615 aa).

An N-terminal signal peptide occupies residues 1–20 (MAHLSLYCLLSVSLLQLVAS). Topologically, residues 21–522 (SGVFELKVHS…VGQTSPSAVA (502 aa)) are extracellular. Residues 159–203 (VFCDEFYFGEACSDYCRPRDDTLGHYTCDENGNKECLVGWQGDYC) form the DSL domain. 26 cysteine pairs are disulfide-bonded: cysteine 161–cysteine 170, cysteine 174–cysteine 186, cysteine 194–cysteine 203, cysteine 208–cysteine 219, cysteine 212–cysteine 225, cysteine 227–cysteine 236, cysteine 245–cysteine 250, cysteine 258–cysteine 267, cysteine 274–cysteine 286, cysteine 280–cysteine 296, cysteine 298–cysteine 307, cysteine 314–cysteine 325, cysteine 319–cysteine 334, cysteine 336–cysteine 345, cysteine 352–cysteine 363, cysteine 357–cysteine 373, cysteine 375–cysteine 384, cysteine 391–cysteine 402, cysteine 396–cysteine 411, cysteine 413–cysteine 422, cysteine 429–cysteine 440, cysteine 434–cysteine 449, cysteine 451–cysteine 460, cysteine 467–cysteine 478, cysteine 472–cysteine 487, and cysteine 489–cysteine 498. EGF-like domains lie at 204–237 (SDPICSSDCSERHGYCESPGECKCRLGWQGPSCS), 241–268 (HYPGCLHGTCSQPWQCVCKEGWGGLFCN), and 270–308 (DLNYCTNHKPCANGATCTNTGQGSYTCTCRPGFGGTNCE). One can recognise an EGF-like 4; calcium-binding domain in the interval 310–346 (EINECDCNPCKNGGSCNDLENDYSCTCPQGFYGKNCE). 2 consecutive EGF-like domains span residues 348–385 (IAMTCADDPCFNGGTCEEKFTGGYVCRCPPTFTGSNCE) and 387–423 (RLDRCSHKPCANGGECVDLGASALCRCRPGFSGSRCE). An EGF-like 7; calcium-binding domain is found at 425 to 461 (NIDDCARYPCQNAGTCQDGINDYTCTCTLGFTGKNCS). N-linked (GlcNAc...) asparagine glycosylation is present at asparagine 459. The EGF-like 8 domain maps to 463 to 499 (RADACLTNPCLHGGTCFTHFSGPVCQCVPGFMGSTCE). Residues 523–543 (VSCVLGVLAVFLGVCVGLVVL) form a helical membrane-spanning segment. The Cytoplasmic portion of the chain corresponds to 544-615 (RRRRHRLRRQ…FLWSAGGGLR (72 aa)).

In terms of processing, ubiquitinated by mib, leading to its endocytosis and subsequent degradation.

It is found in the membrane. Functionally, acts as a ligand for Notch receptors and is involved in primary neurogenesis. Can activate Notch receptors, thereby playing a key role in lateral inhibition, a process that prevents the immediate neighbors of each nascent neural cell from simultaneously embarking on neural differentiation. The polypeptide is Delta-like protein B (dlb) (Danio rerio (Zebrafish)).